The following is a 217-amino-acid chain: Probable coenzyme A transferase subunit beta (217 aa).

Residue Glu50 is part of the active site.

This sequence belongs to the 3-oxoacid CoA-transferase subunit B family. Heterodimer of a subunit alpha and a subunit beta.

In Bacillus subtilis (strain 168), this protein is Probable coenzyme A transferase subunit beta (yodR).